The following is a 515-amino-acid chain: Putative cytochrome P450 CYP13A2 (515 aa).

Position 460 (Cys-460) interacts with heme.

This sequence belongs to the cytochrome P450 family. The cofactor is heme.

Cytochromes P450 are a group of heme-thiolate monooxygenases. They oxidize a variety of structurally unrelated compounds, including steroids, fatty acids, and xenobiotics. In Caenorhabditis elegans, this protein is Putative cytochrome P450 CYP13A2 (cyp-13A2).